A 267-amino-acid chain; its full sequence is Tryptophan synthase alpha chain (267 aa).

Catalysis depends on proton acceptor residues E47 and D58.

This sequence belongs to the TrpA family. In terms of assembly, tetramer of two alpha and two beta chains.

The enzyme catalyses (1S,2R)-1-C-(indol-3-yl)glycerol 3-phosphate + L-serine = D-glyceraldehyde 3-phosphate + L-tryptophan + H2O. It participates in amino-acid biosynthesis; L-tryptophan biosynthesis; L-tryptophan from chorismate: step 5/5. Its function is as follows. The alpha subunit is responsible for the aldol cleavage of indoleglycerol phosphate to indole and glyceraldehyde 3-phosphate. The protein is Tryptophan synthase alpha chain of Prosthecochloris aestuarii (strain DSM 271 / SK 413).